The sequence spans 471 residues: Alpha-galactosidase (471 aa).

An N-terminal signal peptide occupies residues 1 to 18 (MFLLYLFTSFAAVSGVLG). A disulfide bridge links Cys42 with Cys74. Residues Asp72 and Asp73 each contribute to the substrate site. Asn82 carries N-linked (GlcNAc...) asparagine glycosylation. A disulfide bridge links Cys121 with Cys151. Lys147 is a binding site for substrate. Asp149 functions as the Nucleophile in the catalytic mechanism. N-linked (GlcNAc...) asparagine glycosylation is present at Asn175. Arg205 contacts substrate. Asp209 acts as the Proton donor in catalysis. Disulfide bonds link Cys221–Cys237 and Cys223–Cys230. Substrate is bound at residue Gln251. N-linked (GlcNAc...) asparagine glycosylation is found at Asn270, Asn403, Asn412, Asn417, Asn422, Asn435, and Asn454.

Belongs to the glycosyl hydrolase 27 family. Homotetramer.

It localises to the secreted. The catalysed reaction is Hydrolysis of terminal, non-reducing alpha-D-galactose residues in alpha-D-galactosides, including galactose oligosaccharides, galactomannans and galactolipids.. This chain is Alpha-galactosidase (MEL), found in Saccharomyces pastorianus (strain ATCC 76529 / Carlsberg bottom yeast no.1 / CBS 1513 / CLIB 176 / NBRC 1167 / NCYC 396 / NRRL Y-12693) (Saaz-type lager yeast).